A 400-amino-acid chain; its full sequence is Subtilisin-like protease 11 (400 aa).

A signal peptide spans 1 to 19; that stretch reads MGLFKVIFTAVAALSAVDA. The propeptide occupies 20 to 117; sequence AELLSSAKSK…VEHDRHVYIS (98 aa). An Inhibitor I9 domain is found at 35-116; sequence SYLVVMKDSV…FVEHDRHVYI (82 aa). The 274-residue stretch at 127 to 400 folds into the Peptidase S8 domain; it reads SWGLGRVSHR…NKLLYNGSGK (274 aa). A glycan (N-linked (GlcNAc...) asparagine) is linked at asparagine 138. The active-site Charge relay system is aspartate 159. A glycan (N-linked (GlcNAc...) asparagine) is linked at asparagine 181. Histidine 191 serves as the catalytic Charge relay system. N-linked (GlcNAc...) asparagine glycans are attached at residues asparagine 252 and asparagine 337. The Charge relay system role is filled by serine 346. N-linked (GlcNAc...) asparagine glycans are attached at residues asparagine 388 and asparagine 396.

The protein belongs to the peptidase S8 family.

It localises to the secreted. Secreted subtilisin-like serine protease with keratinolytic activity that contributes to pathogenicity. The sequence is that of Subtilisin-like protease 11 (SUB11) from Arthroderma benhamiae (strain ATCC MYA-4681 / CBS 112371) (Trichophyton mentagrophytes).